A 23-amino-acid chain; its full sequence is Apolipophorin-3 (23 aa).

This sequence belongs to the insect apolipophorin-3 family. Equilibrium between a soluble monomer and a bound lipoprotein form. Apolipophorin-3 associates with lipophorin during lipid loading until each particle contains 9 or 14 molecules of apolipophorin-3. As to expression, hemolymph.

The protein resides in the secreted. Functionally, assists in the loading of diacylglycerol, generated from triacylglycerol stores in the fat body through the action of adipokinetic hormone, into lipophorin, the hemolymph lipoprotein. It increases the lipid carrying capacity of lipophorin by covering the expanding hydrophobic surface resulting from diacylglycerol uptake. It thus plays a critical role in the transport of lipids during flight in several species of insects. The protein is Apolipophorin-3 of Melanoplus sanguinipes (Migratory grasshopper).